The chain runs to 153 residues: 3-hydroxyacyl-[acyl-carrier-protein] dehydratase FabZ (153 aa).

H54 is a catalytic residue.

This sequence belongs to the thioester dehydratase family. FabZ subfamily.

The protein localises to the cytoplasm. It catalyses the reaction a (3R)-hydroxyacyl-[ACP] = a (2E)-enoyl-[ACP] + H2O. Its function is as follows. Involved in unsaturated fatty acids biosynthesis. Catalyzes the dehydration of short chain beta-hydroxyacyl-ACPs and long chain saturated and unsaturated beta-hydroxyacyl-ACPs. In Chlamydia trachomatis serovar L2 (strain ATCC VR-902B / DSM 19102 / 434/Bu), this protein is 3-hydroxyacyl-[acyl-carrier-protein] dehydratase FabZ.